The sequence spans 495 residues: 3-octaprenyl-4-hydroxybenzoate carboxy-lyase (495 aa).

Asparagine 172 is a Mn(2+) binding site. Residues isoleucine 175–arginine 177, arginine 189–leucine 191, and arginine 194–glycine 195 contribute to the prenylated FMN site. Glutamate 238 is a Mn(2+) binding site. Catalysis depends on aspartate 287, which acts as the Proton donor.

Belongs to the UbiD family. As to quaternary structure, homohexamer. Prenylated FMN serves as cofactor. It depends on Mn(2+) as a cofactor.

The protein resides in the cell membrane. It carries out the reaction a 4-hydroxy-3-(all-trans-polyprenyl)benzoate + H(+) = a 2-(all-trans-polyprenyl)phenol + CO2. It functions in the pathway cofactor biosynthesis; ubiquinone biosynthesis. Its function is as follows. Catalyzes the decarboxylation of 3-octaprenyl-4-hydroxy benzoate to 2-octaprenylphenol, an intermediate step in ubiquinone biosynthesis. In Marinobacter nauticus (strain ATCC 700491 / DSM 11845 / VT8) (Marinobacter aquaeolei), this protein is 3-octaprenyl-4-hydroxybenzoate carboxy-lyase.